The following is a 214-amino-acid chain: MSQLHAVPGRTKKLPPLRVGVGGPVGSGKTTLVEMLCKTMRERWDLVVVTNDIYTKEDQRLLTVAGALEPERIIGVETGGCPHTAIREDASINLEAVDRMLEKFPNADIVFIESGGDNLAATFSPELSDLTIYVIDVAAGEKIPRKGGPGITKSDLFVINKTDLAPHVGADLSVMEADTRRMRPNRPFVMSNLKTRQGLDEVIRFIETKGLLVG.

The disordered stretch occupies residues 1 to 20; the sequence is MSQLHAVPGRTKKLPPLRVG. 23-30 contributes to the GTP binding site; it reads GPVGSGKT.

It belongs to the SIMIBI class G3E GTPase family. UreG subfamily. As to quaternary structure, homodimer. UreD, UreF and UreG form a complex that acts as a GTP-hydrolysis-dependent molecular chaperone, activating the urease apoprotein by helping to assemble the nickel containing metallocenter of UreC. The UreE protein probably delivers the nickel.

The protein resides in the cytoplasm. In terms of biological role, facilitates the functional incorporation of the urease nickel metallocenter. This process requires GTP hydrolysis, probably effectuated by UreG. The chain is Urease accessory protein UreG from Leptothrix cholodnii (strain ATCC 51168 / LMG 8142 / SP-6) (Leptothrix discophora (strain SP-6)).